A 97-amino-acid polypeptide reads, in one-letter code: Aspartyl/glutamyl-tRNA(Asn/Gln) amidotransferase subunit C (97 aa).

Residues 59 to 78 form a disordered region; it reads STGKLRPDEPAQPLSRDDAL. Over residues 63–78 the composition is skewed to basic and acidic residues; the sequence is LRPDEPAQPLSRDDAL.

This sequence belongs to the GatC family. As to quaternary structure, heterotrimer of A, B and C subunits.

It catalyses the reaction L-glutamyl-tRNA(Gln) + L-glutamine + ATP + H2O = L-glutaminyl-tRNA(Gln) + L-glutamate + ADP + phosphate + H(+). The enzyme catalyses L-aspartyl-tRNA(Asn) + L-glutamine + ATP + H2O = L-asparaginyl-tRNA(Asn) + L-glutamate + ADP + phosphate + 2 H(+). Allows the formation of correctly charged Asn-tRNA(Asn) or Gln-tRNA(Gln) through the transamidation of misacylated Asp-tRNA(Asn) or Glu-tRNA(Gln) in organisms which lack either or both of asparaginyl-tRNA or glutaminyl-tRNA synthetases. The reaction takes place in the presence of glutamine and ATP through an activated phospho-Asp-tRNA(Asn) or phospho-Glu-tRNA(Gln). This Metallosphaera sedula (strain ATCC 51363 / DSM 5348 / JCM 9185 / NBRC 15509 / TH2) protein is Aspartyl/glutamyl-tRNA(Asn/Gln) amidotransferase subunit C.